Here is a 513-residue protein sequence, read N- to C-terminus: Maturase K (513 aa).

This sequence belongs to the intron maturase 2 family. MatK subfamily.

The protein resides in the plastid. The protein localises to the chloroplast. Usually encoded in the trnK tRNA gene intron. Probably assists in splicing its own and other chloroplast group II introns. This is Maturase K from Molinia caerulea (Purple moor-grass).